The following is a 115-amino-acid chain: NADH-ubiquinone oxidoreductase chain 3 (115 aa).

The next 3 membrane-spanning stretches (helical) occupy residues 3-23 (FALI…ITFW), 55-75 (FFLV…LLPL), and 84-104 (LPLM…SLAY).

The protein belongs to the complex I subunit 3 family. As to quaternary structure, core subunit of respiratory chain NADH dehydrogenase (Complex I) which is composed of 45 different subunits. Interacts with TMEM186. Interacts with TMEM242.

Its subcellular location is the mitochondrion inner membrane. The enzyme catalyses a ubiquinone + NADH + 5 H(+)(in) = a ubiquinol + NAD(+) + 4 H(+)(out). Functionally, core subunit of the mitochondrial membrane respiratory chain NADH dehydrogenase (Complex I) which catalyzes electron transfer from NADH through the respiratory chain, using ubiquinone as an electron acceptor. Essential for the catalytic activity of complex I. This chain is NADH-ubiquinone oxidoreductase chain 3, found in Gorilla gorilla gorilla (Western lowland gorilla).